The sequence spans 249 residues: 1-(5-phosphoribosyl)-5-[(5-phosphoribosylamino)methylideneamino] imidazole-4-carboxamide isomerase (249 aa).

The active-site Proton acceptor is aspartate 11. Aspartate 132 functions as the Proton donor in the catalytic mechanism.

This sequence belongs to the HisA/HisF family.

The protein localises to the cytoplasm. The catalysed reaction is 1-(5-phospho-beta-D-ribosyl)-5-[(5-phospho-beta-D-ribosylamino)methylideneamino]imidazole-4-carboxamide = 5-[(5-phospho-1-deoxy-D-ribulos-1-ylimino)methylamino]-1-(5-phospho-beta-D-ribosyl)imidazole-4-carboxamide. The protein operates within amino-acid biosynthesis; L-histidine biosynthesis; L-histidine from 5-phospho-alpha-D-ribose 1-diphosphate: step 4/9. The protein is 1-(5-phosphoribosyl)-5-[(5-phosphoribosylamino)methylideneamino] imidazole-4-carboxamide isomerase of Nitrobacter winogradskyi (strain ATCC 25391 / DSM 10237 / CIP 104748 / NCIMB 11846 / Nb-255).